The sequence spans 634 residues: MNLHAAYIDYALRRSQHMQAEMSGADNVLLKDYQLFVAKVFLGLDSMNSLLLFQETGVGKTVTAVYMLKHLRFLYTSWTVLVLVKKALVEEPWMNTILRFAPEVAKDCVFMNYDDQNFHNKFFTNIKTVSARSRIFVIIDECHNFISKSLSREDGRARNTKHVYNFLARHIASSHNKLLCLSATPIVNNVREFALLVNLLRPGVLPPQSLFHNKRLLDEAELVSKLGCICSYLVHHEASIFEDVEGSELFARKRVLLKYVRMSAKQEDIYHKARAAEFRSGIAVFRVHRRMAATFAFDEFPVRKNLTPDEYDALVASLVRDFEALFAGRALSDATRARLRAGEPIECAASAEDLSLYQALYEHSCKYAEVCVAILASPGKCLVFEPFINLSGIRIFVKYLEVFGISYIEFSSRTKDTRTRAVAEFNRVENTNGELIKTCVFSLSGNEGISFLSINDIFILDMTWNEASLKQIIGRAIRLHSHANNPPERRYVNVHFVVAQLGSGAPSVDDDLLEIIQNKAREFSQLYRVLKLASIEWIHQHCREFAPVDDEAGFRALCSRAIDVTRGASTRRALATGENIWYAFSTLMITVHPGFKTEDGRVYDADGNFLTTMPERPIVRVQGTRLVYIFPELR.

One can recognise a Helicase ATP-binding domain in the interval phenylalanine 41–glycine 203. Position 54–61 (glutamine 54–threonine 61) interacts with ATP. The DEXH box signature appears at aspartate 140–histidine 143. One can recognise a Helicase C-terminal domain in the interval serine 355–lysine 531. The tract at residues aspartate 456 to phenylalanine 523 is binding to the cap-specific mRNA (nucleoside-2'-O-)-methyltransferase.

Belongs to the helicase family. NPH I subfamily. Monomer. Interacts (via C-terminus) with RAP94 (via N-terminus). Interacts with the cap-specific mRNA (nucleoside-2'-O-)-methyltransferase.

The protein localises to the virion. The enzyme catalyses a ribonucleoside 5'-triphosphate + H2O = a ribonucleoside 5'-diphosphate + phosphate + H(+). DNA-dependent ATPase required for providing the needed energy to achieve the termination of early transcripts. Acts in concert with the RAP94 subunit of the virion RNA polymerase and the capping enzyme/VTF to catalyze release of UUUUUNU-containing nascent RNA from the elongation complex. NPH-I must bind ssDNA in order to exhibit ATPase activity. The sequence is that of Nucleoside triphosphatase I (NPH1) from Homo sapiens (Human).